Consider the following 244-residue polypeptide: DNA polymerase sliding clamp (244 aa).

This sequence belongs to the PCNA family. In terms of assembly, homotrimer. The subunits circularize to form a toroid; DNA passes through its center. Replication factor C (RFC) is required to load the toroid on the DNA.

Functionally, sliding clamp subunit that acts as a moving platform for DNA processing. Responsible for tethering the catalytic subunit of DNA polymerase and other proteins to DNA during high-speed replication. This chain is DNA polymerase sliding clamp, found in Methanothrix thermoacetophila (strain DSM 6194 / JCM 14653 / NBRC 101360 / PT) (Methanosaeta thermophila).